Here is a 43-residue protein sequence, read N- to C-terminus: Photosystem II reaction center protein K (43 aa).

A propeptide spanning residues 1 to 6 is cleaved from the precursor; sequence MSLLLA. Residues 18 to 38 traverse the membrane as a helical segment; sequence IVDVLPIIPVLFLLLAFVWQA.

The protein belongs to the PsbK family. PSII is composed of 1 copy each of membrane proteins PsbA, PsbB, PsbC, PsbD, PsbE, PsbF, PsbH, PsbI, PsbJ, PsbK, PsbL, PsbM, PsbT, PsbX, PsbY, PsbZ, Psb30/Ycf12, at least 3 peripheral proteins of the oxygen-evolving complex and a large number of cofactors. It forms dimeric complexes.

The protein localises to the plastid. It localises to the chloroplast thylakoid membrane. One of the components of the core complex of photosystem II (PSII). PSII is a light-driven water:plastoquinone oxidoreductase that uses light energy to abstract electrons from H(2)O, generating O(2) and a proton gradient subsequently used for ATP formation. It consists of a core antenna complex that captures photons, and an electron transfer chain that converts photonic excitation into a charge separation. The sequence is that of Photosystem II reaction center protein K from Oltmannsiellopsis viridis (Marine flagellate).